The sequence spans 504 residues: Glycerol kinase (504 aa).

Thr12 is a binding site for ADP. The ATP site is built by Thr12, Thr13, and Ser14. Residue Thr12 coordinates sn-glycerol 3-phosphate. Arg16 serves as a coordination point for ADP. The sn-glycerol 3-phosphate site is built by Arg82, Glu83, Tyr134, and Asp249. Glycerol is bound by residues Arg82, Glu83, Tyr134, Asp249, and Gln250. Thr271 and Gly315 together coordinate ADP. The ATP site is built by Thr271, Gly315, Gln319, and Gly416. ADP-binding residues include Gly416 and Asn420.

It belongs to the FGGY kinase family.

It carries out the reaction glycerol + ATP = sn-glycerol 3-phosphate + ADP + H(+). It functions in the pathway polyol metabolism; glycerol degradation via glycerol kinase pathway; sn-glycerol 3-phosphate from glycerol: step 1/1. Inhibited by fructose 1,6-bisphosphate (FBP). Functionally, key enzyme in the regulation of glycerol uptake and metabolism. Catalyzes the phosphorylation of glycerol to yield sn-glycerol 3-phosphate. This is Glycerol kinase from Mycobacteroides abscessus (strain ATCC 19977 / DSM 44196 / CCUG 20993 / CIP 104536 / JCM 13569 / NCTC 13031 / TMC 1543 / L948) (Mycobacterium abscessus).